Here is an 864-residue protein sequence, read N- to C-terminus: Translation initiation factor IF-2 (864 aa).

Residues 1–252 (MEDKNKTIKE…KTSSDKRDFS (252 aa)) form a disordered region. Residues 78–90 (KEVKYEESSRKQD) show a composition bias toward basic and acidic residues. A compositionally biased stretch (polar residues) spans 106–120 (VRPSGDSSYPVSRSP). Gly residues predominate over residues 150–212 (RGPGQGGGYQ…PGNRSGGPGG (63 aa)). Basic and acidic residues predominate over residues 239–252 (HDKEKTSSDKRDFS). One can recognise a tr-type G domain in the interval 359–528 (NRPPVVTIMG…LLQAEVMDLK (170 aa)). The interval 368–375 (GHVDHGKT) is G1. 368–375 (GHVDHGKT) is a GTP binding site. Positions 393–397 (GITQH) are G2. Residues 414–417 (DTPG) form a G3 region. Residues 414 to 418 (DTPGH) and 468 to 471 (NKID) contribute to the GTP site. Residues 468–471 (NKID) form a G4 region. The segment at 504–506 (SAR) is G5.

This sequence belongs to the TRAFAC class translation factor GTPase superfamily. Classic translation factor GTPase family. IF-2 subfamily.

The protein localises to the cytoplasm. Its function is as follows. One of the essential components for the initiation of protein synthesis. Protects formylmethionyl-tRNA from spontaneous hydrolysis and promotes its binding to the 30S ribosomal subunits. Also involved in the hydrolysis of GTP during the formation of the 70S ribosomal complex. In Leptospira borgpetersenii serovar Hardjo-bovis (strain L550), this protein is Translation initiation factor IF-2.